The following is a 288-amino-acid chain: Light-independent protochlorophyllide reductase iron-sulfur ATP-binding protein (288 aa).

ATP-binding positions include 10-15 and K39; that span reads GIGKST. Mg(2+) is bound at residue S14. C95 and C129 together coordinate [4Fe-4S] cluster. An ATP-binding site is contributed by 180–181; sequence NR.

Belongs to the NifH/BchL/ChlL family. In terms of assembly, homodimer. Protochlorophyllide reductase is composed of three subunits; ChlL, ChlN and ChlB. [4Fe-4S] cluster is required as a cofactor.

It carries out the reaction chlorophyllide a + oxidized 2[4Fe-4S]-[ferredoxin] + 2 ADP + 2 phosphate = protochlorophyllide a + reduced 2[4Fe-4S]-[ferredoxin] + 2 ATP + 2 H2O. The protein operates within porphyrin-containing compound metabolism; chlorophyll biosynthesis (light-independent). Component of the dark-operative protochlorophyllide reductase (DPOR) that uses Mg-ATP and reduced ferredoxin to reduce ring D of protochlorophyllide (Pchlide) to form chlorophyllide a (Chlide). This reaction is light-independent. The L component serves as a unique electron donor to the NB-component of the complex, and binds Mg-ATP. This chain is Light-independent protochlorophyllide reductase iron-sulfur ATP-binding protein, found in Nostoc punctiforme (strain ATCC 29133 / PCC 73102).